The following is a 250-amino-acid chain: PF03932 family protein CutC (250 aa).

It belongs to the CutC family.

It localises to the cytoplasm. This Proteus mirabilis (strain HI4320) protein is PF03932 family protein CutC.